The following is a 496-amino-acid chain: Alanine aminotransferase 1 (496 aa).

Alanine 2 is modified (N-acetylalanine). Threonine 22 is modified (phosphothreonine). At lysine 314 the chain carries N6-(pyridoxal phosphate)lysine.

Belongs to the class-I pyridoxal-phosphate-dependent aminotransferase family. Alanine aminotransferase subfamily. Homodimer. It depends on pyridoxal 5'-phosphate as a cofactor.

It localises to the cytoplasm. It carries out the reaction L-alanine + 2-oxoglutarate = pyruvate + L-glutamate. Its pathway is amino-acid degradation; L-alanine degradation via transaminase pathway; pyruvate from L-alanine: step 1/1. Its function is as follows. Catalyzes the reversible transamination between alanine and 2-oxoglutarate to form pyruvate and glutamate. Participates in cellular nitrogen metabolism and also in liver gluconeogenesis starting with precursors transported from skeletal muscles. The sequence is that of Alanine aminotransferase 1 (GPT) from Bos taurus (Bovine).